The following is a 339-amino-acid chain: Ornithine carbamoyltransferase (339 aa).

Carbamoyl phosphate is bound by residues 56–59 (STRT), arginine 107, and 134–137 (HPTQ). Residues asparagine 168, aspartate 232, and 236–237 (SM) each bind L-ornithine. Carbamoyl phosphate-binding positions include 274 to 275 (CL) and arginine 320.

Belongs to the aspartate/ornithine carbamoyltransferase superfamily. OTCase family.

It localises to the cytoplasm. It catalyses the reaction carbamoyl phosphate + L-ornithine = L-citrulline + phosphate + H(+). It functions in the pathway amino-acid biosynthesis; L-arginine biosynthesis; L-arginine from L-ornithine and carbamoyl phosphate: step 1/3. Reversibly catalyzes the transfer of the carbamoyl group from carbamoyl phosphate (CP) to the N(epsilon) atom of ornithine (ORN) to produce L-citrulline. This is Ornithine carbamoyltransferase from Buchnera aphidicola subsp. Baizongia pistaciae (strain Bp).